A 227-amino-acid polypeptide reads, in one-letter code: Phosphoribosylformylglycinamidine synthase subunit PurQ (227 aa).

The Glutamine amidotransferase type-1 domain maps to 3-225 (FAVIVLPGSN…VKNWRETHVT (223 aa)). Cys86 serves as the catalytic Nucleophile. Residues His194 and Glu196 contribute to the active site.

In terms of assembly, part of the FGAM synthase complex composed of 1 PurL, 1 PurQ and 2 PurS subunits.

It is found in the cytoplasm. It carries out the reaction N(2)-formyl-N(1)-(5-phospho-beta-D-ribosyl)glycinamide + L-glutamine + ATP + H2O = 2-formamido-N(1)-(5-O-phospho-beta-D-ribosyl)acetamidine + L-glutamate + ADP + phosphate + H(+). It catalyses the reaction L-glutamine + H2O = L-glutamate + NH4(+). The protein operates within purine metabolism; IMP biosynthesis via de novo pathway; 5-amino-1-(5-phospho-D-ribosyl)imidazole from N(2)-formyl-N(1)-(5-phospho-D-ribosyl)glycinamide: step 1/2. Its function is as follows. Part of the phosphoribosylformylglycinamidine synthase complex involved in the purines biosynthetic pathway. Catalyzes the ATP-dependent conversion of formylglycinamide ribonucleotide (FGAR) and glutamine to yield formylglycinamidine ribonucleotide (FGAM) and glutamate. The FGAM synthase complex is composed of three subunits. PurQ produces an ammonia molecule by converting glutamine to glutamate. PurL transfers the ammonia molecule to FGAR to form FGAM in an ATP-dependent manner. PurS interacts with PurQ and PurL and is thought to assist in the transfer of the ammonia molecule from PurQ to PurL. The polypeptide is Phosphoribosylformylglycinamidine synthase subunit PurQ (Bacillus subtilis (strain 168)).